A 156-amino-acid chain; its full sequence is Ribosomal RNA large subunit methyltransferase H (156 aa).

S-adenosyl-L-methionine is bound by residues leucine 72, glycine 103, and 122 to 127 (LSSLTL).

It belongs to the RNA methyltransferase RlmH family. As to quaternary structure, homodimer.

Its subcellular location is the cytoplasm. It catalyses the reaction pseudouridine(1915) in 23S rRNA + S-adenosyl-L-methionine = N(3)-methylpseudouridine(1915) in 23S rRNA + S-adenosyl-L-homocysteine + H(+). Specifically methylates the pseudouridine at position 1915 (m3Psi1915) in 23S rRNA. The protein is Ribosomal RNA large subunit methyltransferase H of Dechloromonas aromatica (strain RCB).